Here is a 629-residue protein sequence, read N- to C-terminus: Hemocyanin F chain (629 aa).

Histidine 172, histidine 176, histidine 203, histidine 324, histidine 328, and histidine 364 together coordinate Cu cation. Asparagine 395 and asparagine 447 each carry an N-linked (GlcNAc...) asparagine glycan. Positions 503 to 513 (SESSVTVSHTP) are enriched in polar residues. Residues 503–522 (SESSVTVSHTPTFEELQRGE) are disordered. The N-linked (GlcNAc...) asparagine glycan is linked to asparagine 527. Cysteine 534 and cysteine 582 form a disulfide bridge. Asparagine 615 is a glycosylation site (N-linked (GlcNAc...) asparagine).

The protein belongs to the tyrosinase family. Hemocyanin subfamily. Tarantula hemocyanin is a 24-chain polymer with seven different chains identified. Hemolymph.

The protein resides in the secreted. It localises to the extracellular space. In terms of biological role, hemocyanins are copper-containing oxygen carriers occurring freely dissolved in the hemolymph of many mollusks and arthropods. This is Hemocyanin F chain (HCF) from Aphonopelma sp. (American tarantula).